The chain runs to 431 residues: Beta-lactamase hydrolase-like protein (431 aa).

Zn(2+) is bound by residues histidine 212, histidine 214, and histidine 286. Aspartate 309 lines the substrate pocket.

The protein belongs to the metallo-beta-lactamase superfamily. It depends on Zn(2+) as a cofactor.

Its function is as follows. Could play a role in cell adherence or biofilm development. The protein is Beta-lactamase hydrolase-like protein of Xylella fastidiosa (strain 9a5c).